Consider the following 795-residue polypeptide: Protocadherin beta-5 (795 aa).

Residues 1 to 30 (METALAKTPQKRQVMFLAILLLLWEAGSEA) form the signal peptide. The Extracellular portion of the chain corresponds to 31–689 (VRYSIPEETE…AQADSLTVYL (659 aa)). 5 consecutive Cadherin domains span residues 35–133 (IPEE…SPEF), 138–242 (MLLK…APEF), 247–346 (YEVQ…APEL), 351–450 (LSSP…APAF), and 455–560 (YTLF…SPFV). N-linked (GlcNAc...) asparagine glycosylation occurs at asparagine 169. Position 296 is an N6-acetyllysine (lysine 296). N-linked (GlcNAc...) asparagine glycosylation is found at asparagine 417 and asparagine 435. N-linked (GlcNAc...) asparagine glycosylation occurs at asparagine 566. The Cadherin 6 domain occupies 567 to 670 (GSAPCTELVP…LVDGFSQPYL (104 aa)). The chain crosses the membrane as a helical span at residues 690–710 (VVALASVSSLFLFSVLLFVAV). Residues 711–795 (RLCRRSRAAP…AAFRNSFGLN (85 aa)) are Cytoplasmic-facing.

The protein resides in the cell membrane. Functionally, potential calcium-dependent cell-adhesion protein. May be involved in the establishment and maintenance of specific neuronal connections in the brain. The protein is Protocadherin beta-5 (PCDHB5) of Pan troglodytes (Chimpanzee).